Reading from the N-terminus, the 2554-residue chain is DnaJ homolog subfamily C GRV2 (2554 aa).

Disordered regions lie at residues aspartate 746–leucine 766 and glutamine 810–serine 833. Residues aspartate 815–alanine 825 show a composition bias toward polar residues. Coiled-coil stretches lie at residues threonine 925 to serine 951 and arginine 1518 to glutamine 1546. Residues leucine 1524 to glycine 1606 enclose the J domain. Disordered regions lie at residues isoleucine 1960 to glycine 1994 and serine 2339 to proline 2366. The segment covering serine 1966–alanine 1977 has biased composition (polar residues). Residues isoleucine 1982–glycine 1994 show a composition bias toward basic and acidic residues. The span at valine 2352 to proline 2366 shows a compositional bias: polar residues.

As to expression, constitutively expressed in roots, hypocotyls, leaves (e.g. vascular tissues), stems, flowers (e.g. petals and stigmas), siliques and pollen.

The protein localises to the endosome membrane. Functionally, required for endosome formation, vacuolar protein sorting and determination of the embryo growth axis. Necessary for the transport of proteins into protein storage vacuoles (PSVs). Participates in vesicle trafficking from the endosome to the central vacuole. Involved in the regulation of shoot phototropism and gravitropism, probably through the positioning of specialized amyloplasts (statoliths) in endodermal cells. The polypeptide is DnaJ homolog subfamily C GRV2 (GRV2) (Arabidopsis thaliana (Mouse-ear cress)).